Reading from the N-terminus, the 161-residue chain is Transcriptional repressor NrdR (161 aa).

Residues Cys3 to Cys34 fold into a zinc finger. Residues Pro49–Glu139 enclose the ATP-cone domain.

This sequence belongs to the NrdR family. The cofactor is Zn(2+).

Functionally, negatively regulates transcription of bacterial ribonucleotide reductase nrd genes and operons by binding to NrdR-boxes. The sequence is that of Transcriptional repressor NrdR from Chromohalobacter salexigens (strain ATCC BAA-138 / DSM 3043 / CIP 106854 / NCIMB 13768 / 1H11).